A 60-amino-acid polypeptide reads, in one-letter code: VEQLQRLKSEFGASRYLTEARRQALAQELRLNEAQIKIWFQNKRAKLKKANGLRNPLALH.

The segment at residues 1-41 (VEQLQRLKSEFGASRYLTEARRQALAQELRLNEAQIKIWFQ) is a DNA-binding region (homeobox).

Belongs to the engrailed homeobox family.

The protein resides in the nucleus. The sequence is that of Homeobox protein engrailed-like B from Myxine glutinosa (Atlantic hagfish).